A 587-amino-acid polypeptide reads, in one-letter code: MDLFKILLLVFFVNISFCFAADPYSFYNFEVSYITASPLGVPQQVIAINGKFPGPTINVTTNENLVVNVRNKLDEGLLLHWNGIQQRRVSWQDGVLGTNCPIPPKWNWTYEFQVKDQIGSFFYFPSLHFQRASGGFGSFVVNPRAIIPVPFSTPDGDITVTIGDWYIRNHTALRKALDDGKDLGMPDGVLINGKGPYRYNDTLVADGIDFETITVHPGKTYRLRVSNVGISTSLNFRIQGHNLVLAESEGSYTVQQNYTSLDIHVGQSYSFLVTMDQNASSDYYIVASARVVNETIWRRVTGVGILKYTNSKGKAKGQLPPGPQDEFDKTFSMNQARSIRWNVSASGARPNPQGSFKYGSINVTDVYVLRNMPPVTISGKRRTTLNGISFKNPSTPIRLADKLKVKDVYKLDFPKRPLTGPAKVATSIINGTYRGFMEVVLQNNDTKMQSYHMSGYAFFVVGMDYGEWTENSRGTYNKWDGIARSTIQVYPGAWSAILISLDNPGAWNLRTENLDSWYLGQETYVRVVNPDENNKTEFGHPDNVLYCGALSKLQKPQKVSSSASKSIGFTSLSMVVMALVMMMMLQH.

An N-terminal signal peptide occupies residues 1–20 (MDLFKILLLVFFVNISFCFA). Asn-14 and Asn-58 each carry an N-linked (GlcNAc...) asparagine glycan. A Cu cation-binding site is contributed by His-80. N-linked (GlcNAc...) asparagine glycosylation is found at Asn-107, Asn-169, Asn-200, Asn-257, Asn-278, Asn-293, Asn-342, Asn-362, Asn-430, and Asn-444. Residue His-452 coordinates Cu cation. A glycan (N-linked (GlcNAc...) asparagine) is linked at Asn-534. Ser-562 carries GPI-anchor amidated serine lipidation. Positions 563–587 (ASKSIGFTSLSMVVMALVMMMMLQH) are cleaved as a propeptide — removed in mature form.

This sequence belongs to the multicopper oxidase family. Requires Cu cation as cofactor. Expressed in roots, hypocotyls, cotyledons, leaves, stems and flowers.

It localises to the secreted. Its subcellular location is the cell wall. It is found in the cell membrane. In terms of biological role, may be a monocopper oxidase of unknown specificity. Involved in directional growth processes, possibly by participating in cell wall expansion. This is Monocopper oxidase-like protein SKU5 (SKU5) from Arabidopsis thaliana (Mouse-ear cress).